The primary structure comprises 327 residues: Lipoyl synthase (327 aa).

Residues cysteine 66, cysteine 71, cysteine 77, cysteine 92, cysteine 96, cysteine 99, and serine 306 each coordinate [4Fe-4S] cluster. The 218-residue stretch at 78–295 (FSKGTATFMI…EKEAYELGFS (218 aa)) folds into the Radical SAM core domain.

It belongs to the radical SAM superfamily. Lipoyl synthase family. Requires [4Fe-4S] cluster as cofactor.

The protein localises to the cytoplasm. It catalyses the reaction [[Fe-S] cluster scaffold protein carrying a second [4Fe-4S](2+) cluster] + N(6)-octanoyl-L-lysyl-[protein] + 2 oxidized [2Fe-2S]-[ferredoxin] + 2 S-adenosyl-L-methionine + 4 H(+) = [[Fe-S] cluster scaffold protein] + N(6)-[(R)-dihydrolipoyl]-L-lysyl-[protein] + 4 Fe(3+) + 2 hydrogen sulfide + 2 5'-deoxyadenosine + 2 L-methionine + 2 reduced [2Fe-2S]-[ferredoxin]. It participates in protein modification; protein lipoylation via endogenous pathway; protein N(6)-(lipoyl)lysine from octanoyl-[acyl-carrier-protein]: step 2/2. Its function is as follows. Catalyzes the radical-mediated insertion of two sulfur atoms into the C-6 and C-8 positions of the octanoyl moiety bound to the lipoyl domains of lipoate-dependent enzymes, thereby converting the octanoylated domains into lipoylated derivatives. This is Lipoyl synthase from Neisseria meningitidis serogroup A / serotype 4A (strain DSM 15465 / Z2491).